The primary structure comprises 465 residues: GTPase Der (465 aa).

2 EngA-type G domains span residues 3 to 166 and 184 to 358; these read FLVA…LNEY and IHFS…ACAN. GTP-binding positions include 9–16, 56–60, 118–121, 190–197, 237–241, and 302–305; these read GRANVGKS, DTGGI, NKVD, GRPNVGKS, DTAGV, and NKWD. In terms of domain architecture, KH-like spans 359 to 443; the sequence is KKITTADATR…PIVFEFKQSE (85 aa). The disordered stretch occupies residues 446–465; it reads FADRKNKRSKDEGSKSKKVK.

Belongs to the TRAFAC class TrmE-Era-EngA-EngB-Septin-like GTPase superfamily. EngA (Der) GTPase family. Associates with the 50S ribosomal subunit.

Functionally, GTPase that plays an essential role in the late steps of ribosome biogenesis. The protein is GTPase Der of Francisella tularensis subsp. novicida (strain U112).